A 47-amino-acid polypeptide reads, in one-letter code: Putative heat shock protein HSP90 (47 aa).

R47 serves as a coordination point for ATP.

This sequence belongs to the heat shock protein 90 family. Homodimer.

The protein resides in the cytoplasm. In terms of biological role, putative molecular chaperone that may promote the maturation, structural maintenance and proper regulation of specific target proteins. This Populus euphratica (Euphrates poplar) protein is Putative heat shock protein HSP90.